Here is a 558-residue protein sequence, read N- to C-terminus: MNESFAQLFEESLKEIKTRPGSIIRGTIVSIEKDMVLVDAGLKSESAIPVEQFQNSQGLLDIQVGDQIDVALDAIEDGFGETLLSREKAKRHEAWLILEKAHEKSETVIGIINGKVKGGFTVELNDIRAFLPGSLVDVRPVRDTIHLEGKELEFKVIKLDQKRNNVVVSRRAVIESENSAERDQLLENLQEGMHVKGIVKNLTDYGAFVDLGGVDGLLHITDMAWKRVKHPSEIVNVGDEINIKILKFDRERTRVSLGLKQLGEDPWIAISKRYPEETKLSGRVTNLTDYGCFVEIEEGVEGLVHVSEMDWTNKNIHPSKVVTVNDVVEVMVLDIDEERRRISLGLKQCKINPWKEFSETHKKGVHVLGKIKSITDFGIFIGLNGGIDGLVHLSDISWTIPGEEAVVKYKKNDEISAVVLQVDAERERISLGIKQLEEDPFNTYIANHKKGAIITGIIKSLDKKNIIVKLPENLEGVIKLTEITRVYSETMINKLKIEDKILVKLSSFDRKNRIIYLTIHMIDEDEKKDLTAPSNNKTNDDSFSNVMTEAFKAAKNTE.

S1 motif domains are found at residues 21-87 (GSII…LSRE), 105-171 (SETV…VSRR), 192-260 (GMHV…LGLK), 277-347 (ETKL…LGLK), 364-434 (GVHV…LGIK), and 451-520 (GAII…LTIH).

The protein belongs to the bacterial ribosomal protein bS1 family.

Binds mRNA; thus facilitating recognition of the initiation point. It is needed to translate mRNA with a short Shine-Dalgarno (SD) purine-rich sequence. The protein is Small ribosomal subunit protein bS1 (rpsA) of Buchnera aphidicola subsp. Acyrthosiphon pisum (strain APS) (Acyrthosiphon pisum symbiotic bacterium).